A 201-amino-acid polypeptide reads, in one-letter code: Small ribosomal subunit protein uS4 (201 aa).

The region spanning 91 to 151 (SRLDNVVYRA…DKSINTLPFE (61 aa)) is the S4 RNA-binding domain.

This sequence belongs to the universal ribosomal protein uS4 family. Part of the 30S ribosomal subunit. Contacts protein S5. The interaction surface between S4 and S5 is involved in control of translational fidelity.

Functionally, one of the primary rRNA binding proteins, it binds directly to 16S rRNA where it nucleates assembly of the body of the 30S subunit. Its function is as follows. With S5 and S12 plays an important role in translational accuracy. The chain is Small ribosomal subunit protein uS4 from Mycolicibacterium gilvum (strain PYR-GCK) (Mycobacterium gilvum (strain PYR-GCK)).